The sequence spans 758 residues: Zinc finger protein VAR3, chloroplastic (758 aa).

Residues 122-502 (FPGFPDELLR…PKEETQIGLI (381 aa)) are 3 X approximate repeat. RanBP2-type zinc fingers lie at residues 276 to 305 (KRGDWICSRCSGMNFARNVKCFQCDEARPK) and 308 to 338 (LTGSEWECPQCDFYNYGRNVACLRCDCKRPR). Residues 368–415 (RWLSKVAQGGSDANSVDTDEDFPEIMPLRKGVNRYVVSTRKPPLERRL) form repeat 1. Disordered regions lie at residues 410–470 (PLER…RFES), 512–545 (GGNQNVYQEDKSDANHSGKETDRLEKEDHKSEEP), 572–606 (EKMPMRKGENRFVVSRKKDRSLTSPAYKRPEDSDF), 629–654 (TLPAPATENVSQVVQQEPREPSINKS), and 727–758 (KRKTPLERRLTSQRHQRNPHITNSDPTGKGDK). Basic and acidic residues-rich tracts occupy residues 457-469 (RSDDKNVSSRRFE), 519-545 (QEDKSDANHSGKETDRLEKEDHKSEEP), and 572-581 (EKMPMRKGEN). Residues 547-596 (RWFKRVTELHNVSDLESAIPQEISPEKMPMRKGENRFVVSRKKDRSLTSP) form repeat 2. Copy 3 of the repeat occupies 688 to 736 (RWFKRVAEIKNISELSEIPDEDFPSIMPMRKGVNRFVVSKRKTPLERRL).

Interacts in vitro with the chloroplast-located protein CCD4/NCED4. Homodimer. Interacts with ORRM1. Interacts with PCMP-H51/CRR28 and PCMP-H12/OTP82. Interacts with ORRM6. In terms of tissue distribution, weakly expressed in leaves and roots.

It is found in the plastid. The protein resides in the chloroplast. Probable component of some protein complex required for chloroplast and palisade cell development. Involved in C-to-U editing of chloroplastic RNA. Controls a large number of chloroplastic editing sites. Binds the editing recognition trans-factors PCMP-H51/CRR28 and PCMP-H12/OTP82. The polypeptide is Zinc finger protein VAR3, chloroplastic (Arabidopsis thaliana (Mouse-ear cress)).